Reading from the N-terminus, the 742-residue chain is Phosphoribosylformylglycinamidine synthase subunit PurL (742 aa).

The active site involves His50. Residues Tyr53 and Lys92 each coordinate ATP. Glu94 contributes to the Mg(2+) binding site. Residues 95–98 and Arg117 contribute to the substrate site; that span reads SHNH. His96 functions as the Proton acceptor in the catalytic mechanism. Position 118 (Asp118) interacts with Mg(2+). Gln241 is a binding site for substrate. Asp269 serves as a coordination point for Mg(2+). 313–315 is a substrate binding site; it reads ESQ. The ATP site is built by Asp494 and Gly531. Asn532 lines the Mg(2+) pocket. Ser534 contributes to the substrate binding site.

This sequence belongs to the FGAMS family. Monomer. Part of the FGAM synthase complex composed of 1 PurL, 1 PurQ and 2 PurS subunits.

The protein resides in the cytoplasm. It catalyses the reaction N(2)-formyl-N(1)-(5-phospho-beta-D-ribosyl)glycinamide + L-glutamine + ATP + H2O = 2-formamido-N(1)-(5-O-phospho-beta-D-ribosyl)acetamidine + L-glutamate + ADP + phosphate + H(+). It functions in the pathway purine metabolism; IMP biosynthesis via de novo pathway; 5-amino-1-(5-phospho-D-ribosyl)imidazole from N(2)-formyl-N(1)-(5-phospho-D-ribosyl)glycinamide: step 1/2. Functionally, part of the phosphoribosylformylglycinamidine synthase complex involved in the purines biosynthetic pathway. Catalyzes the ATP-dependent conversion of formylglycinamide ribonucleotide (FGAR) and glutamine to yield formylglycinamidine ribonucleotide (FGAM) and glutamate. The FGAM synthase complex is composed of three subunits. PurQ produces an ammonia molecule by converting glutamine to glutamate. PurL transfers the ammonia molecule to FGAR to form FGAM in an ATP-dependent manner. PurS interacts with PurQ and PurL and is thought to assist in the transfer of the ammonia molecule from PurQ to PurL. This is Phosphoribosylformylglycinamidine synthase subunit PurL from Sinorhizobium fredii (strain NBRC 101917 / NGR234).